The chain runs to 456 residues: Adenylosuccinate lyase (456 aa).

Residues 15-16, 90-92, and 122-123 each bind N(6)-(1,2-dicarboxyethyl)-AMP; these read RY, NHD, and TS. Catalysis depends on histidine 171, which acts as the Proton donor/acceptor. Residue glutamine 247 participates in N(6)-(1,2-dicarboxyethyl)-AMP binding. Serine 295 (proton donor/acceptor) is an active-site residue. Residues serine 296, 301–303, asparagine 309, arginine 335, and 340–344 each bind N(6)-(1,2-dicarboxyethyl)-AMP; these read KVN and STVLR.

It belongs to the lyase 1 family. Adenylosuccinate lyase subfamily. As to quaternary structure, homotetramer. Residues from neighboring subunits contribute catalytic and substrate-binding residues to each active site.

It catalyses the reaction N(6)-(1,2-dicarboxyethyl)-AMP = fumarate + AMP. It carries out the reaction (2S)-2-[5-amino-1-(5-phospho-beta-D-ribosyl)imidazole-4-carboxamido]succinate = 5-amino-1-(5-phospho-beta-D-ribosyl)imidazole-4-carboxamide + fumarate. Its pathway is purine metabolism; AMP biosynthesis via de novo pathway; AMP from IMP: step 2/2. It participates in purine metabolism; IMP biosynthesis via de novo pathway; 5-amino-1-(5-phospho-D-ribosyl)imidazole-4-carboxamide from 5-amino-1-(5-phospho-D-ribosyl)imidazole-4-carboxylate: step 2/2. Functionally, catalyzes two reactions in de novo purine nucleotide biosynthesis. Catalyzes the breakdown of 5-aminoimidazole- (N-succinylocarboxamide) ribotide (SAICAR or 2-[5-amino-1-(5-phospho-beta-D-ribosyl)imidazole-4-carboxamido]succinate) to 5-aminoimidazole-4-carboxamide ribotide (AICAR or 5-amino-1-(5-phospho-beta-D-ribosyl)imidazole-4-carboxamide) and fumarate, and of adenylosuccinate (ADS or N(6)-(1,2-dicarboxyethyl)-AMP) to adenosine monophosphate (AMP) and fumarate. The chain is Adenylosuccinate lyase (purB) from Buchnera aphidicola subsp. Acyrthosiphon pisum (strain APS) (Acyrthosiphon pisum symbiotic bacterium).